The primary structure comprises 462 residues: Arginine biosynthesis bifunctional protein ArgJ, mitochondrial (462 aa).

The substrate site is built by Thr-189, Lys-215, Thr-236, Glu-327, Asn-457, and Ser-462. Catalysis depends on Thr-236, which acts as the Nucleophile.

Belongs to the ArgJ family. In terms of assembly, heterodimer of an alpha and a beta chain. Post-translationally, the alpha and beta chains are autoproteolytically processed from a single precursor protein within the mitochondrion.

It localises to the mitochondrion matrix. The catalysed reaction is N(2)-acetyl-L-ornithine + L-glutamate = N-acetyl-L-glutamate + L-ornithine. It carries out the reaction L-glutamate + acetyl-CoA = N-acetyl-L-glutamate + CoA + H(+). Its pathway is amino-acid biosynthesis; L-arginine biosynthesis; L-ornithine and N-acetyl-L-glutamate from L-glutamate and N(2)-acetyl-L-ornithine (cyclic): step 1/1. The protein operates within amino-acid biosynthesis; L-arginine biosynthesis; N(2)-acetyl-L-ornithine from L-glutamate: step 1/4. Its function is as follows. Catalyzes two activities which are involved in the cyclic version of arginine biosynthesis: the synthesis of acetylglutamate from glutamate and acetyl-CoA, and of ornithine by transacetylation between acetylornithine and glutamate. The protein is Arginine biosynthesis bifunctional protein ArgJ, mitochondrial of Postia placenta (strain ATCC 44394 / Madison 698-R) (Brown rot fungus).